The chain runs to 146 residues: Hemoglobin cathodic subunit beta (146 aa).

One can recognise a Globin domain in the interval 2–146; it reads EWSASERSTI…VVSALSKQYF (145 aa). Heme b contacts are provided by His-63 and His-92.

The protein belongs to the globin family. Heterotetramer of two alpha chains and two beta chains. As to expression, red blood cells.

In terms of biological role, involved in oxygen transport from gills to the various peripheral tissues. The chain is Hemoglobin cathodic subunit beta (hbb2) from Anguilla anguilla (European freshwater eel).